A 720-amino-acid chain; its full sequence is ABC transporter G family member STR2 (720 aa).

Topologically, residues 1–467 (MRHANGRRGD…NFINIRRTPE (467 aa)) are cytoplasmic. An ABC transporter domain is found at 25–274 (LEFSNLTYTV…LGRMGRKVPK (250 aa)). ATP is bound at residue 70–77 (GPSGAGKS). The disordered stretch occupies residues 313-346 (GAHEMSIVPPSPAPSHREGRGHDRSNKRLHLKDQ). A compositionally biased stretch (basic and acidic residues) spans 327 to 346 (SHREGRGHDRSNKRLHLKDQ). The chain crosses the membrane as a helical span at residues 468–488 (LFLSRLVVLTVMGIMMATMFM). Residues 489–502 (HPKKNLQGITNRLS) lie on the Extracellular side of the membrane. A helical membrane pass occupies residues 503 to 523 (FFIFTVCLFFFSSNDAVPAFI). At 524–547 (QERFIFVRETSHNKYRASSYTIAG) the chain is on the cytoplasmic side. Residues 548-568 (LITYLPFLAVQAAVYAVIVWF) traverse the membrane as a helical segment. Over 569–575 (ALSLRGP) the chain is Extracellular. Residues 576–596 (FIYFLIVLYMSLLSTNSFVVF) form a helical membrane-spanning segment. Topologically, residues 597 to 604 (VSSVVPNY) are cytoplasmic. Residues 605-625 (ILGYAAVIAFTALFFLFCGYF) form a helical membrane-spanning segment. The Extracellular segment spans residues 626–693 (LNSHDMPQYW…QVESKKWEKV (68 aa)). N-linked (GlcNAc...) asparagine glycosylation occurs at N681. A helical membrane pass occupies residues 694 to 714 (YIMLAWAIVYRILFYIVLRFF). Over 715-720 (SKNQRT) the chain is Cytoplasmic.

This sequence belongs to the ABC transporter superfamily. ABCG family. Stunted arbuscule (STR) subfamily. As to quaternary structure, heterodimerizes with STR; the resulting transporter is located in the peri-arbuscular membrane.

Its subcellular location is the cell membrane. Together with STR, required for arbuscule development in arbuscular mycorrhizal (AM) symbiosis. The chain is ABC transporter G family member STR2 from Petunia hybrida (Petunia).